A 391-amino-acid polypeptide reads, in one-letter code: Succinyl-diaminopimelate desuccinylase (391 aa).

His67 contacts Zn(2+). The active site involves Asp69. Asp101 contacts Zn(2+). The Proton acceptor role is filled by Glu135. The Zn(2+) site is built by Glu136, Glu164, and His353.

Belongs to the peptidase M20A family. DapE subfamily. In terms of assembly, homodimer. The cofactor is Zn(2+). Requires Co(2+) as cofactor.

It carries out the reaction N-succinyl-(2S,6S)-2,6-diaminopimelate + H2O = (2S,6S)-2,6-diaminopimelate + succinate. It participates in amino-acid biosynthesis; L-lysine biosynthesis via DAP pathway; LL-2,6-diaminopimelate from (S)-tetrahydrodipicolinate (succinylase route): step 3/3. In terms of biological role, catalyzes the hydrolysis of N-succinyl-L,L-diaminopimelic acid (SDAP), forming succinate and LL-2,6-diaminopimelate (DAP), an intermediate involved in the bacterial biosynthesis of lysine and meso-diaminopimelic acid, an essential component of bacterial cell walls. The polypeptide is Succinyl-diaminopimelate desuccinylase (Rickettsia bellii (strain RML369-C)).